Here is a 524-residue protein sequence, read N- to C-terminus: MTITYTQAFAKNFLGNAPGWYKIAILAFLIINPLVFSLSPFYAGWLLVIEFIFTLAMALKCYPLQPGGLLALEAVFIGMTSPEKIAHEVAANLEVLLLLIFMVAGIYFMKQLLLFVFTKLLLNIRSKIVLSLAFCLAAAFLSAFLDALTVIAVVISVAVGFYGIYHQVASGGGSNVALSDDSLLTDSAKRDALDQFRAFLRSLLMHAGVGTALGGVMTMVGEPQNLIIAKNADWHFVSFLLRMAPVTVPVFCCGILTCYLVERFSLFGYGAQLPDRVRQILLNFDRESTNSRSRQDKLRLMIQALVGVWLVSALAFHLAEVGLIGLSVIVLVTSLCGVTDEHLIGKAFQESLPFTALLTVFFSIVAVIIDQHLFTPVIQFVLQSPPDRQLTLFYLFNGLLSSISDNVFVGTVYIHEAKAALESGAISLKQFELLAVAINTGTNLPSVATPNGQAAFLFLLTSALAPLIRLSYGRMVWMALPYTVVMTLVGLLCVIFTLEPATQLMSQWHLLTLPPAQDVLSSGL.

12 helical membrane-spanning segments follow: residues 23–43, 44–64, 97–117, 120–140, 144–164, 203–223, 236–256, 304–324, 354–374, 392–412, 448–468, and 476–496; these read IAIL…PFYA, GWLL…CYPL, LLLI…LFVF, LLLN…AAAF, FLDA…FYGI, LLMH…VGEP, FVSF…CGIL, ALVG…VGLI, FTAL…QHLF, LFYL…VGTV, ATPN…APLI, and VWMA…CVIF.

It belongs to the NhaB Na(+)/H(+) (TC 2.A.34) antiporter family.

The protein resides in the cell inner membrane. The catalysed reaction is 2 Na(+)(in) + 3 H(+)(out) = 2 Na(+)(out) + 3 H(+)(in). Its function is as follows. Na(+)/H(+) antiporter that extrudes sodium in exchange for external protons. The sequence is that of Na(+)/H(+) antiporter NhaB from Edwardsiella ictaluri (strain 93-146).